Reading from the N-terminus, the 170-residue chain is Bifunctional protein PyrR (170 aa).

Residues 90 to 102 (LVLVDDVLMSGRT) carry the PRPP-binding motif.

This sequence belongs to the purine/pyrimidine phosphoribosyltransferase family. PyrR subfamily.

The enzyme catalyses UMP + diphosphate = 5-phospho-alpha-D-ribose 1-diphosphate + uracil. Its function is as follows. Regulates the transcription of the pyrimidine nucleotide (pyr) operon in response to exogenous pyrimidines. Also displays a weak uracil phosphoribosyltransferase activity which is not physiologically significant. In Pseudomonas paraeruginosa (strain DSM 24068 / PA7) (Pseudomonas aeruginosa (strain PA7)), this protein is Bifunctional protein PyrR.